The primary structure comprises 269 residues: Exodeoxyribonuclease WalJ (269 aa).

Positions 61, 63, 65, 66, and 150 each coordinate a divalent metal cation.

Belongs to the metallo-beta-lactamase superfamily. It depends on Fe(2+) as a cofactor. Zn(2+) serves as cofactor. Mn(2+) is required as a cofactor.

It is found in the cell membrane. In terms of biological role, 5'-&gt;3' double-stranded DNA exonuclease. May be involved in the WalK/WalR signal transduction pathway. Required for accurate coordination of cell division with DNA replication. May play a role in cell wall metabolism. This chain is Exodeoxyribonuclease WalJ, found in Streptococcus pneumoniae serotype 2 (strain D39 / NCTC 7466).